We begin with the raw amino-acid sequence, 779 residues long: Serine/threonine-protein kinase SIK1 (779 aa).

The Protein kinase domain maps to tyrosine 27–methionine 278. ATP-binding positions include leucine 33 to valine 41 and lysine 56. Aspartate 149 (proton acceptor) is an active-site residue. Threonine 182 is subject to Phosphothreonine; by LKB1 and GSK3-beta. Position 186 is a phosphoserine; by autocatalysis (serine 186). One can recognise a UBA domain in the interval aspartate 303–glutamate 343. Threonine 322 is subject to Phosphothreonine; by CaMK1. Disordered stretches follow at residues serine 350 to leucine 375 and glutamate 449 to arginine 472. Over residues arginine 363–serine 373 the composition is skewed to polar residues. A Phosphoserine; by PKA modification is found at serine 577. Positions lysine 586–arginine 612 are RK-rich region. The tract at residues threonine 621–cysteine 641 is disordered. Polar residues predominate over residues threonine 628–cysteine 641.

Belongs to the protein kinase superfamily. CAMK Ser/Thr protein kinase family. AMPK subfamily. In terms of assembly, interacts (when phosphorylated on Thr-182 and Ser-186) with YWHAZ. Interacts with ATP1A1. Mg(2+) serves as cofactor. In terms of processing, phosphorylated at Thr-182 by STK11/LKB1 in complex with STE20-related adapter-alpha (STRADA) pseudo kinase and CAB39, leading to its activation. Phosphorylation at Thr-182 promotes autophosphorylation at Ser-186, which is required for sustained activity. Autophosphorylation at Ser-186 is maintained by sequential phosphorylation at Thr-182 by GSK3-beta. GSK3-beta cannot initiate phosphorylation at Thr-182, it can only maintain it. Phosphorylation at Ser-577 by PKA promotes translocation to the cytoplasm. Phosphorylation at Thr-322 by CaMK1 following intracellular sodium concentration leads to activation. In terms of tissue distribution, expressed in lung, skin, ovary, heart and stomach. No expression in brain, liver or adult skeletal muscle but is present in skeletal muscle progenitor cells of the somite beginning at 9.5 dpc. Present at 8.0 dpc in the monolayer of presumptive myocardial cells but rapidly down-regulated at 8.5 dpc upon primitive ventricle formation, although still present in myocardial cells that will populate the primitive atrium and bulbus cordis. At 9.5 dpc expression is down-regulated in the primitive atrium but observed in the sinus venosus and truncus arteriosus.

It is found in the cytoplasm. Its subcellular location is the nucleus. The enzyme catalyses L-seryl-[protein] + ATP = O-phospho-L-seryl-[protein] + ADP + H(+). It carries out the reaction L-threonyl-[protein] + ATP = O-phospho-L-threonyl-[protein] + ADP + H(+). Activated by phosphorylation on Thr-182. Also activated by phosphorylation on Thr-322 in response to increases in intracellular sodium in parallel with elevations in intracellular calcium through the reversible sodium/calcium exchanger. In terms of biological role, serine/threonine-protein kinase involved in various processes such as cell cycle regulation, gluconeogenesis and lipogenesis regulation, muscle growth and differentiation and tumor suppression. Phosphorylates HDAC4, HDAC5, PPME1, SREBF1, CRTC1/TORC1 and CRTC2/TORC2. Acts as a tumor suppressor and plays a key role in p53/TP53-dependent anoikis, a type of apoptosis triggered by cell detachment: required for phosphorylation of p53/TP53 in response to loss of adhesion and is able to suppress metastasis. Part of a sodium-sensing signaling network, probably by mediating phosphorylation of PPME1: following increases in intracellular sodium, SIK1 is activated by CaMK1 and phosphorylates PPME1 subunit of protein phosphatase 2A (PP2A), leading to dephosphorylation of sodium/potassium-transporting ATPase ATP1A1 and subsequent increase activity of ATP1A1. Acts as a regulator of muscle cells by phosphorylating and inhibiting class II histone deacetylases HDAC4 and HDAC5, leading to promote expression of MEF2 target genes in myocytes. Also required during cardiomyogenesis by regulating the exit of cardiomyoblasts from the cell cycle via down-regulation of CDKN1C/p57Kip2. Acts as a regulator of hepatic gluconeogenesis by phosphorylating and repressing the CREB-specific coactivators CRTC1/TORC1 and CRTC2/TORC2, leading to inhibit CREB activity. Also regulates hepatic lipogenesis by phosphorylating and inhibiting SREBF1. In concert with CRTC1/TORC1, regulates the light-induced entrainment of the circadian clock by attenuating PER1 induction; represses CREB-mediated transcription of PER1 by phosphorylating and deactivating CRTC1/TORC1. This Mus musculus (Mouse) protein is Serine/threonine-protein kinase SIK1 (Sik1).